The chain runs to 126 residues: C-type natriuretic peptide (126 aa).

An N-terminal signal peptide occupies residues 1–23 (MHLSQLIACALLLALLSLRPSEA). The segment at 19-71 (RPSEAKPGTPPKVPRTPPGEELAEPQAAGGNQKKGDKTPGGGGANLKGDRSRL) is disordered. The propeptide occupies 24–73 (KPGTPPKVPRTPPGEELAEPQAAGGNQKKGDKTPGGGGANLKGDRSRLLR). A compositionally biased stretch (pro residues) spans 26 to 35 (GTPPKVPRTP). An intrachain disulfide couples cysteine 110 to cysteine 126.

Belongs to the natriuretic peptide family. Post-translationally, degraded by IDE (in vitro). As to expression, expressed exclusively in brain.

Its subcellular location is the secreted. Its function is as follows. Hormone which plays a role in endochondral ossification through regulation of cartilaginous growth plate chondrocytes proliferation and differentiation. May also be vasoactive and natriuretic. Acts by specifically binding and stimulating NPR2 to produce cGMP. Binds the clearance receptor NPR3. The chain is C-type natriuretic peptide (Nppc) from Rattus norvegicus (Rat).